We begin with the raw amino-acid sequence, 334 residues long: Ornithine carbamoyltransferase, catabolic (334 aa).

Residues 57–60 (STRT), Q84, R108, and 135–138 (HPTQ) contribute to the carbamoyl phosphate site. Residues N168, D232, and 236–237 (SM) each bind L-ornithine. Carbamoyl phosphate contacts are provided by residues 274–275 (CL) and R321.

This sequence belongs to the aspartate/ornithine carbamoyltransferase superfamily. OTCase family.

The protein resides in the cytoplasm. It catalyses the reaction carbamoyl phosphate + L-ornithine = L-citrulline + phosphate + H(+). Its pathway is amino-acid degradation; L-arginine degradation via ADI pathway; carbamoyl phosphate from L-arginine: step 2/2. Reversibly catalyzes the transfer of the carbamoyl group from carbamoyl phosphate (CP) to the N(epsilon) atom of ornithine (ORN) to produce L-citrulline. The sequence is that of Ornithine carbamoyltransferase, catabolic (arcB) from Avibacterium paragallinarum (Haemophilus gallinarum).